Reading from the N-terminus, the 976-residue chain is Dibasic-processing endoprotease (976 aa).

Residues Met-1–Ala-17 form the signal peptide. Asn-156 carries N-linked (GlcNAc...) asparagine glycosylation. Residues Ala-172 to Asp-212 are compositionally biased toward basic and acidic residues. The disordered stretch occupies residues Ala-172 to Met-246. The segment covering Lys-213–Ala-231 has biased composition (acidic residues). One can recognise a Peptidase S8 domain in the interval Gln-277 to Val-595. Asn-291 and Asn-299 each carry an N-linked (GlcNAc...) asparagine glycan. Asp-311 functions as the Charge relay system in the catalytic mechanism. Asn-336 carries an N-linked (GlcNAc...) asparagine glycan. Residues His-349 and Ser-528 each act as charge relay system in the active site. The chain crosses the membrane as a helical span at residues His-524–Val-544. The 134-residue stretch at Val-604–Asp-737 folds into the P/Homo B domain. Asn-606 carries N-linked (GlcNAc...) asparagine glycosylation. The interval Gly-733–Asp-848 is disordered. Over residues Glu-734–Asp-830 the composition is skewed to basic and acidic residues. A helical transmembrane segment spans residues Ala-855–Ala-875. Asn-886 carries N-linked (GlcNAc...) asparagine glycosylation. Residues Pro-914–Gly-976 form a disordered region. Basic and acidic residues-rich tracts occupy residues Glu-915 to Tyr-928 and Met-940 to Gly-976.

This sequence belongs to the peptidase S8 family. Furin subfamily.

Its subcellular location is the membrane. The protein is Dibasic-processing endoprotease (XPR6) of Yarrowia lipolytica (strain CLIB 122 / E 150) (Yeast).